Consider the following 353-residue polypeptide: Tsukushi (353 aa).

The N-terminal stretch at 1–16 is a signal peptide; the sequence is MPWPLLLLLAVSGAQT. In terms of domain architecture, LRRNT spans 17–58; sequence TRPCFPGCQCEVETFGLFDSFSLTRVDCSGLGPHIMPVPIPL. 10 LRR repeats span residues 59–80, 85–106, 109–130, 132–153, 159–179, 185–206, 207–227, 230–249, 255–276, and 280–301; these read DTAHLDLSSNRLEMVNESVLAG, TLAGLDLSHNLLTSISPTAFSR, YLESLDLSHNGLTALPAESFTS, PLSDVNLSHNQLREVSVSAFTT, ALHVDLSHNLIHRLVPHPTRA, TIQSLNLAWNRLHAVPNLRDLP, LRYLSLDGNPLAVIGPGAFAG, GLTHLSLASLQRLPELAPSG, GLQVLDLSGNPKLNWAGAEVFS, and SLQELDLSGTNLVPLPEALLLH. An N-linked (GlcNAc...) asparagine glycan is attached at N74. The N-linked (GlcNAc...) asparagine glycan is linked to N137.

As to quaternary structure, interacts with FZD4 (via FZ domain); competes with WNT2B for binding to FZD4, inhibiting Wnt signaling and repressing peripheral eye development. Interacts with TGFB1; the interaction contributes to regulation of the hair cycle. Interacts with netrin. Interacts with CCN2.

Its subcellular location is the secreted. Contributes to various developmental events and other processes such as wound healing and cholesterol homeostasis through its interactions with multiple signaling pathways. Wnt signaling inhibitor which competes with WNT2B for binding to Wnt receptor FZD4 and represses WNT2B-dependent development of the peripheral eye. Plays a role in regulating the hair cycle by controlling TGFB1 signaling. Required for the development of the anterior commissure in the brain by inhibiting neurite outgrowth. Essential for terminal differentiation of hippocampal neural stem cells. Plays a role in regulating bone elongation and bone mass by modulating growth plate chondrocyte function and overall body size. Required for development of the inner ear through its involvement in stereocilia formation in inner hair cells. Facilitates wound healing by inhibiting secretion of TGFB1 from macrophages which prevents myofibroblast differentiation, maintaining inflammatory cell quiescence. Plays a role in cholesterol homeostasis by reducing circulating high-density lipoprotein cholesterol, lowering cholesterol efflux capacity and decreasing cholesterol-to-bile acid conversion in the liver. In one study, shown to negatively regulate sympathetic innervation in brown fat, leading to reduced energy expenditure. In another study, shown not to affect brown fat thermogenic capacity, body weight gain or glucose homeostasis. This Homo sapiens (Human) protein is Tsukushi (TSKU).